Here is a 603-residue protein sequence, read N- to C-terminus: Vacuolar protein sorting-associated protein 33A (603 aa).

Belongs to the STXBP/unc-18/SEC1 family. In terms of assembly, probable component of the homotypic fusion and vacuole protein sorting (HOPS) complex consisting of the core class C Vps proteins vps-11, vps-16, vps-18, and which further associates with vps-33.1, vps-39 and vps-41. Interacts with spe-39. Ubiquitously expressed at high levels in somatic tissues including the pharynx, muscles, hypodermis, neurons, coelomocytes and spermatheca. Expressed in the intestine.

It localises to the lysosome. It is found in the early endosome. Its subcellular location is the late endosome. The protein resides in the apical cell membrane. Plays a role in vesicle-mediated protein trafficking to lysosomal compartments including the endocytic membrane transport pathways. Believed to act as a component of the putative HOPS endosomal tethering complex which is proposed to be involved in the rab-5-to-rab-7 endosome conversion probably implicating sand-1, and via binding SNAREs and SNARE complexes to mediate tethering and docking events during SNARE-mediated membrane fusion. The HOPS complex is proposed to be recruited to rab-7 on the late endosomal membrane and to regulate late endocytic, phagocytic and autophagic traffic towards lysosomes. Within the HOPS complex, contributes to the normal development of gut granules in embryonic and adult intestinal cells. Required for endosome/lysosome fusion. Required for early embryonic development. The polypeptide is Vacuolar protein sorting-associated protein 33A (Caenorhabditis elegans).